The following is a 416-amino-acid chain: Peptide chain release factor subunit 1 (416 aa).

Belongs to the eukaryotic release factor 1 family. In terms of assembly, heterodimer of two subunits, one of which binds GTP.

Its subcellular location is the cytoplasm. Its function is as follows. Directs the termination of nascent peptide synthesis (translation) in response to the termination codons UAA, UAG and UGA. In Halobacterium salinarum (strain ATCC 29341 / DSM 671 / R1), this protein is Peptide chain release factor subunit 1.